Here is a 376-residue protein sequence, read N- to C-terminus: Alkanesulfonate monooxygenase (376 aa).

It belongs to the SsuD family.

It carries out the reaction an alkanesulfonate + FMNH2 + O2 = an aldehyde + FMN + sulfite + H2O + 2 H(+). Catalyzes the desulfonation of aliphatic sulfonates. The polypeptide is Alkanesulfonate monooxygenase (Bacillus licheniformis (strain ATCC 14580 / DSM 13 / JCM 2505 / CCUG 7422 / NBRC 12200 / NCIMB 9375 / NCTC 10341 / NRRL NRS-1264 / Gibson 46)).